The following is a 376-amino-acid chain: Myeloid leukemia factor (376 aa).

Residues glycine 96–arginine 202 are interaction with DREF. Disordered stretches follow at residues serine 124–glycine 147, glycine 187–alanine 224, and glutamine 250–lysine 376. Residues serine 262–isoleucine 273 are compositionally biased toward polar residues. A compositionally biased stretch (low complexity) spans alanine 274–arginine 318. A Phosphothreonine modification is found at threonine 323.

The protein belongs to the MLF family. Interacts with DRE-binding factor Dref. As to expression, expressed at high levels in unfertilized eggs, early embryos, pupae and adult males while a low level expression is found in adult females and larvae.

It localises to the cytoplasm. The protein is Myeloid leukemia factor (Mlf) of Drosophila melanogaster (Fruit fly).